The primary structure comprises 174 residues: NADH-quinone oxidoreductase subunit I (174 aa).

2 4Fe-4S ferredoxin-type domains span residues 44–74 (LNRY…VEGD) and 90–119 (RVYQ…MTND). Positions 54, 57, 60, 64, 99, 102, 105, and 109 each coordinate [4Fe-4S] cluster.

The protein belongs to the complex I 23 kDa subunit family. NDH-1 is composed of 14 different subunits. Subunits NuoA, H, J, K, L, M, N constitute the membrane sector of the complex. The cofactor is [4Fe-4S] cluster.

It localises to the cell membrane. It catalyses the reaction a quinone + NADH + 5 H(+)(in) = a quinol + NAD(+) + 4 H(+)(out). In terms of biological role, NDH-1 shuttles electrons from NADH, via FMN and iron-sulfur (Fe-S) centers, to quinones in the respiratory chain. The immediate electron acceptor for the enzyme in this species is believed to be menaquinone. Couples the redox reaction to proton translocation (for every two electrons transferred, four hydrogen ions are translocated across the cytoplasmic membrane), and thus conserves the redox energy in a proton gradient. The polypeptide is NADH-quinone oxidoreductase subunit I (Mycobacterium sp. (strain KMS)).